The primary structure comprises 122 residues: Basic phospholipase A2 homolog (122 aa).

Cystine bridges form between cysteine 26–cysteine 115, cysteine 28–cysteine 44, cysteine 43–cysteine 95, cysteine 49–cysteine 122, cysteine 50–cysteine 88, cysteine 57–cysteine 81, and cysteine 75–cysteine 86. The tract at residues 105–117 (KRYMTYPNILCSS) is important for membrane-damaging activities in eukaryotes and bacteria; heparin-binding.

The protein belongs to the phospholipase A2 family. Group II subfamily. N49 sub-subfamily. As to expression, expressed by the venom gland.

The protein resides in the secreted. The chain is Basic phospholipase A2 homolog from Gloydius halys (Chinese water mocassin).